The primary structure comprises 311 residues: Pyrimidine-specific ribonucleoside hydrolase RihA (311 aa).

The active site involves H240.

It belongs to the IUNH family. RihA subfamily.

In terms of biological role, hydrolyzes with equal efficiency cytidine or uridine to ribose and cytosine or uracil, respectively. The chain is Pyrimidine-specific ribonucleoside hydrolase RihA from Escherichia coli O17:K52:H18 (strain UMN026 / ExPEC).